A 389-amino-acid polypeptide reads, in one-letter code: Dihydroorotase (389 aa).

Residues His-51 and His-53 each coordinate Zn(2+). Substrate contacts are provided by residues 53 to 55 (HVR) and Asn-85. Lys-133, His-158, His-192, and Asp-254 together coordinate Zn(2+). Residue Lys-133 is modified to N6-carboxylysine. Asp-254 is a catalytic residue. Residues His-258 and 272-273 (PG) each bind substrate.

The protein belongs to the metallo-dependent hydrolases superfamily. DHOase family. Class I DHOase subfamily. It depends on Zn(2+) as a cofactor.

It catalyses the reaction (S)-dihydroorotate + H2O = N-carbamoyl-L-aspartate + H(+). Its pathway is pyrimidine metabolism; UMP biosynthesis via de novo pathway; (S)-dihydroorotate from bicarbonate: step 3/3. Its function is as follows. Catalyzes the reversible cyclization of carbamoyl aspartate to dihydroorotate. This is Dihydroorotase from Sulfurisphaera tokodaii (strain DSM 16993 / JCM 10545 / NBRC 100140 / 7) (Sulfolobus tokodaii).